Reading from the N-terminus, the 1521-residue chain is Protein dispatched homolog 1 (1521 aa).

The span at methionine 1 to valine 10 shows a compositional bias: polar residues. Positions methionine 1–leucine 55 are disordered. A compositionally biased stretch (low complexity) spans leucine 11–proline 35. N-linked (GlcNAc...) asparagine glycosylation is found at asparagine 14 and asparagine 58. Residues valine 189 to valine 209 traverse the membrane as a helical segment. Asparagine 390 is a glycosylation site (N-linked (GlcNAc...) asparagine). Residues glycine 485–leucine 657 enclose the SSD domain. The next 3 helical transmembrane spans lie at leucine 499–valine 519, methionine 524–leucine 544, and valine 548–isoleucine 568. Asparagine 581 is a glycosylation site (N-linked (GlcNAc...) asparagine). The next 8 helical transmembrane spans lie at alanine 603 to valine 623, glycine 637 to leucine 657, tyrosine 717 to asparagine 737, methionine 986 to isoleucine 1006, leucine 1008 to leucine 1028, valine 1038 to tyrosine 1058, isoleucine 1081 to leucine 1101, and phenylalanine 1109 to cysteine 1129. Polar residues-rich tracts occupy residues glutamine 1355–histidine 1364 and threonine 1418–glutamine 1428. The interval glutamine 1355–leucine 1440 is disordered. Residue asparagine 1455 is glycosylated (N-linked (GlcNAc...) asparagine).

This sequence belongs to the dispatched family. In terms of assembly, interacts with SHH; via the cholesterol anchor of the dually lipid-modified SHH (ShhNp).

It is found in the membrane. Functions in hedgehog (Hh) signaling. Regulates the release and extracellular accumulation of cholesterol-modified hedgehog proteins and is hence required for effective production of the Hh signal. Synergizes with SCUBE2 to cause an increase in SHH secretion. This chain is Protein dispatched homolog 1 (Disp1), found in Mus musculus (Mouse).